The sequence spans 382 residues: Mannitol-1-phosphate 5-dehydrogenase (382 aa).

NAD(+) is bound at residue 3-14; the sequence is ALHFGAGNIGRG.

This sequence belongs to the mannitol dehydrogenase family.

The enzyme catalyses D-mannitol 1-phosphate + NAD(+) = beta-D-fructose 6-phosphate + NADH + H(+). This Tolumonas auensis (strain DSM 9187 / NBRC 110442 / TA 4) protein is Mannitol-1-phosphate 5-dehydrogenase.